A 130-amino-acid chain; its full sequence is Small ribosomal subunit protein uS11 (130 aa).

It belongs to the universal ribosomal protein uS11 family. As to quaternary structure, part of the 30S ribosomal subunit. Interacts with proteins S7 and S18. Binds to IF-3.

In terms of biological role, located on the platform of the 30S subunit, it bridges several disparate RNA helices of the 16S rRNA. Forms part of the Shine-Dalgarno cleft in the 70S ribosome. This chain is Small ribosomal subunit protein uS11, found in Acholeplasma laidlawii (strain PG-8A).